We begin with the raw amino-acid sequence, 316 residues long: Methionyl-tRNA formyltransferase (316 aa).

108–111 (SLLP) provides a ligand contact to (6S)-5,6,7,8-tetrahydrofolate.

This sequence belongs to the Fmt family.

It catalyses the reaction L-methionyl-tRNA(fMet) + (6R)-10-formyltetrahydrofolate = N-formyl-L-methionyl-tRNA(fMet) + (6S)-5,6,7,8-tetrahydrofolate + H(+). Functionally, attaches a formyl group to the free amino group of methionyl-tRNA(fMet). The formyl group appears to play a dual role in the initiator identity of N-formylmethionyl-tRNA by promoting its recognition by IF2 and preventing the misappropriation of this tRNA by the elongation apparatus. The polypeptide is Methionyl-tRNA formyltransferase (Heliobacterium modesticaldum (strain ATCC 51547 / Ice1)).